The primary structure comprises 423 residues: Serine--tRNA ligase (423 aa).

Basic and acidic residues-rich tracts occupy residues 1-24 (MIDL…RGED) and 62-71 (KMRDASPEEK). The tract at residues 1–71 (MIDLKQLRDD…KMRDASPEEK (71 aa)) is disordered. An L-serine-binding site is contributed by 230 to 232 (TSE). ATP-binding positions include 261-263 (RRE) and Val277. Glu284 serves as a coordination point for L-serine. Residue 348 to 351 (ELTS) participates in ATP binding. An L-serine-binding site is contributed by Thr383.

The protein belongs to the class-II aminoacyl-tRNA synthetase family. Type-1 seryl-tRNA synthetase subfamily. As to quaternary structure, homodimer. The tRNA molecule binds across the dimer.

The protein localises to the cytoplasm. It carries out the reaction tRNA(Ser) + L-serine + ATP = L-seryl-tRNA(Ser) + AMP + diphosphate + H(+). The catalysed reaction is tRNA(Sec) + L-serine + ATP = L-seryl-tRNA(Sec) + AMP + diphosphate + H(+). The protein operates within aminoacyl-tRNA biosynthesis; selenocysteinyl-tRNA(Sec) biosynthesis; L-seryl-tRNA(Sec) from L-serine and tRNA(Sec): step 1/1. Functionally, catalyzes the attachment of serine to tRNA(Ser). Is also able to aminoacylate tRNA(Sec) with serine, to form the misacylated tRNA L-seryl-tRNA(Sec), which will be further converted into selenocysteinyl-tRNA(Sec). This is Serine--tRNA ligase from Corynebacterium kroppenstedtii (strain DSM 44385 / JCM 11950 / CIP 105744 / CCUG 35717).